A 688-amino-acid chain; its full sequence is Glycine--tRNA ligase beta subunit (688 aa).

The protein belongs to the class-II aminoacyl-tRNA synthetase family. Tetramer of two alpha and two beta subunits.

The protein localises to the cytoplasm. The catalysed reaction is tRNA(Gly) + glycine + ATP = glycyl-tRNA(Gly) + AMP + diphosphate. In Histophilus somni (strain 129Pt) (Haemophilus somnus), this protein is Glycine--tRNA ligase beta subunit.